A 59-amino-acid polypeptide reads, in one-letter code: UPF0434 protein PBPRA2383 (59 aa).

Belongs to the UPF0434 family.

The chain is UPF0434 protein PBPRA2383 from Photobacterium profundum (strain SS9).